A 474-amino-acid polypeptide reads, in one-letter code: tRNA-2-methylthio-N(6)-dimethylallyladenosine synthase (474 aa).

An MTTase N-terminal domain is found at 3-120 (KKLHIKTWGC…LPDMIEQVRR (118 aa)). Residues C12, C49, C83, C157, C161, and C164 each contribute to the [4Fe-4S] cluster site. The Radical SAM core domain maps to 143–375 (RAEGPTAFVS…QDRITQQAMR (233 aa)). In terms of domain architecture, TRAM spans 378-441 (RHMMGTVQRI…TNSLRGKFIR (64 aa)).

Belongs to the methylthiotransferase family. MiaB subfamily. As to quaternary structure, monomer. [4Fe-4S] cluster serves as cofactor.

The protein localises to the cytoplasm. The catalysed reaction is N(6)-dimethylallyladenosine(37) in tRNA + (sulfur carrier)-SH + AH2 + 2 S-adenosyl-L-methionine = 2-methylsulfanyl-N(6)-dimethylallyladenosine(37) in tRNA + (sulfur carrier)-H + 5'-deoxyadenosine + L-methionine + A + S-adenosyl-L-homocysteine + 2 H(+). Its function is as follows. Catalyzes the methylthiolation of N6-(dimethylallyl)adenosine (i(6)A), leading to the formation of 2-methylthio-N6-(dimethylallyl)adenosine (ms(2)i(6)A) at position 37 in tRNAs that read codons beginning with uridine. This Shewanella putrefaciens (strain CN-32 / ATCC BAA-453) protein is tRNA-2-methylthio-N(6)-dimethylallyladenosine synthase.